The following is a 471-amino-acid chain: 5-hydroxytryptamine receptor 2A (471 aa).

At Met-1–Leu-80 the chain is on the extracellular side. N-linked (GlcNAc...) asparagine glycans are attached at residues Asn-8, Asn-38, Asn-44, Asn-51, and Asn-54. A helical membrane pass occupies residues Thr-81–Met-97. At Ala-98 to Tyr-111 the chain is on the cytoplasmic side. Residues Phe-112–Tyr-137 traverse the membrane as a helical segment. The Extracellular portion of the chain corresponds to Gly-138–Lys-146. A helical transmembrane segment spans residues Leu-147–Leu-171. Cys-148 and Cys-227 are joined by a disulfide. Asp-155 lines the serotonin pocket. The short motif at Asp-172 to Tyr-174 is the DRY motif; important for ligand-induced conformation changes element. Over Asp-172–Lys-191 the chain is Cytoplasmic. Residues Ala-192 to Leu-215 traverse the membrane as a helical segment. Residues Gln-216 to Asp-232 lie on the Extracellular side of the membrane. Residues Asn-233 to Ile-258 form a helical membrane-spanning segment. The Cytoplasmic portion of the chain corresponds to Lys-259 to Cys-322. Ser-280 is modified (phosphoserine). A helical membrane pass occupies residues Lys-323–Ile-348. Asn-343 is a binding site for serotonin. Cys-349 and Cys-353 are disulfide-bonded. Over Cys-349–Asp-356 the chain is Extracellular. A helical membrane pass occupies residues Val-357–Leu-382. Residues Asn-376–Tyr-380 carry the NPxxY motif; important for ligand-induced conformation changes and signaling motif. Residues Phe-383–Val-471 are Cytoplasmic-facing. Residues Lys-450–Val-471 are disordered. The span at Gln-451 to Asn-465 shows a compositional bias: basic and acidic residues. The PDZ-binding signature appears at Ser-469–Val-471.

The protein belongs to the G-protein coupled receptor 1 family. Interacts (via C-terminus) with MPDZ and PATJ. May interact (via C-terminus) with MPP3, PRDX6, DLG4, DLG1, CASK, APBA1 and MAGI2. Interacts with GRM2 and DRD2; this may affect signaling.

It localises to the cell membrane. The protein resides in the cell projection. It is found in the dendrite. The protein localises to the axon. Its subcellular location is the cytoplasmic vesicle. It localises to the membrane. The protein resides in the caveola. It is found in the presynapse. Its activity is regulated as follows. G-protein coupled receptor activity is regulated by lipids: oleamide increases HTR2A-mediated activity. Functionally, G-protein coupled receptor for 5-hydroxytryptamine (serotonin). Also functions as a receptor for various drugs and psychoactive substances, including mescaline, psilocybin, 1-(2,5-dimethoxy-4-iodophenyl)-2-aminopropane (DOI) and lysergic acid diethylamide (LSD). Ligand binding causes a conformation change that triggers signaling via guanine nucleotide-binding proteins (G proteins) and modulates the activity of downstream effectors. HTR2A is coupled to G(q)/G(11) G alpha proteins and activates phospholipase C-beta, releasing diacylglycerol (DAG) and inositol 1,4,5-trisphosphate (IP3) second messengers that modulate the activity of phosphatidylinositol 3-kinase and promote the release of Ca(2+) ions from intracellular stores, respectively. Beta-arrestin family members inhibit signaling via G proteins and mediate activation of alternative signaling pathways. Affects neural activity, perception, cognition and mood. Plays a role in the regulation of behavior, including responses to anxiogenic situations and psychoactive substances. Plays a role in intestinal smooth muscle contraction, and may play a role in arterial vasoconstriction. The sequence is that of 5-hydroxytryptamine receptor 2A (HTR2A) from Macaca mulatta (Rhesus macaque).